Reading from the N-terminus, the 363-residue chain is Ataxin-3 (363 aa).

The Josephin domain maps to 1-180 (MESIFHERQE…DCEADQLLQM (180 aa)). The active-site Nucleophile is the C14. Catalysis depends on H119, which acts as the Proton acceptor. N134 is an active-site residue. Over residues 192–209 (IGEETAQSRDQRLPRSDV) the composition is skewed to basic and acidic residues. The segment at 192 to 212 (IGEETAQSRDQRLPRSDVDQA) is disordered. UIM domains are found at residues 227 to 246 (EDEE…IDME), 247 to 266 (DEEA…SRQS), and 337 to 356 (SEED…ARNH). Positions 260–290 (MQGSRQSEFSNSLPQNASQPPHTSQTDSLSS) are enriched in polar residues. Residues 260 to 363 (MQGSRQSEFS…RNHLSTEEKK (104 aa)) are disordered. Residues 353–363 (ARNHLSTEEKK) show a composition bias toward basic and acidic residues.

As to expression, widely expressed.

The protein resides in the nucleus matrix. Its subcellular location is the nucleus. It is found in the lysosome membrane. It catalyses the reaction Thiol-dependent hydrolysis of ester, thioester, amide, peptide and isopeptide bonds formed by the C-terminal Gly of ubiquitin (a 76-residue protein attached to proteins as an intracellular targeting signal).. In terms of biological role, deubiquitinating enzyme involved in protein homeostasis maintenance, transcription, cytoskeleton regulation, myogenesis and degradation of misfolded chaperone substrates. Binds long polyubiquitin chains and trims them, while it has weak or no activity against chains of 4 or less ubiquitins. Involved in degradation of misfolded chaperone substrates via its interaction with STUB1/CHIP: recruited to monoubiquitinated STUB1/CHIP, and restricts the length of ubiquitin chain attached to STUB1/CHIP substrates and preventing further chain extension. Interacts with key regulators of transcription and represses transcription: acts as a histone-binding protein that regulates transcription. Acts as a negative regulator of mTORC1 signaling in response to amino acid deprivation by mediating deubiquitination of RHEB, thereby promoting RHEB inactivation by the TSC-TBC complex. Regulates autophagy via the deubiquitination of 'Lys-402' of BECN1 leading to the stabilization of BECN1. The protein is Ataxin-3 (ATXN3) of Gallus gallus (Chicken).